A 1233-amino-acid polypeptide reads, in one-letter code: Protein Jumonji (1233 aa).

Residues 1-10 are compositionally biased toward basic residues; it reads MSKERPKRNI. Disordered stretches follow at residues 1–22, 65–148, 165–335, 355–379, 423–451, and 466–542; these read MSKE…DGIP, NGQS…LSKR, PALP…VKYT, ETKL…ESSN, EGLR…MKGA, and KPLL…GWGM. Residues 84–96 show a composition bias toward low complexity; it reads SQVSSTSNDISSS. A Nuclear localization signal motif is present at residues 102-108; that stretch reads PSRKRPR. Positions 115-127 are enriched in polar residues; it reads FAQSQPNSPSTTP. Residues 139 to 168 are sufficient for interaction with the PRC2 complex; sequence ATQISDLSKRKPKTEDFLTFLCLRGSPALP. Acidic residues predominate over residues 178–191; sequence QDDEDEEEEEEETE. Composition is skewed to polar residues over residues 195–208 and 216–228; these read TATN…QSTP and QVPN…GSSK. Residues 229–262 show a composition bias toward basic and acidic residues; that stretch reads SLKEKEPAQKHKSKEATPGKEKNSEHKAESRKDQ. The span at 268–285 shows a compositional bias: polar residues; sequence HPTTNTGSSTKGLTANNH. The segment covering 309–318 has biased composition (low complexity); the sequence is SSPSANAASA. The span at 365–379 shows a compositional bias: polar residues; that stretch reads SPVNHTISGKLESSN. Basic and acidic residues-rich tracts occupy residues 423 to 440 and 473 to 485; these read EGLR…HIDK and LKKE…LERN. A compositionally biased stretch (polar residues) spans 506 to 519; the sequence is ENASCENRSTSQAE. The span at 520 to 535 shows a compositional bias: basic and acidic residues; the sequence is SLHKPQDSMGKHEKGS. The 42-residue stretch at 546–587 folds into the JmjN domain; the sequence is IPILRPSTKEFHDPLIYIESVRAQVEKYGMCRVIPPPDWRPE. The ARID domain occupies 610-702; sequence WGPNVQRLAC…YLLSYDSLSP (93 aa). The GSGFP motif signature appears at 863 to 867; that stretch reads GSGFP. The 165-residue stretch at 873-1037 folds into the JmjC domain; sequence PFSRHGWNLT…MGFKTAKEMK (165 aa). The tract at residues 1197 to 1233 is disordered; the sequence is ENCISKPTPKRGPRKRATVDVPSSRLSSSSSSKSASS. Residues 1219–1233 are compositionally biased toward low complexity; it reads SSRLSSSSSSKSASS.

Belongs to the JARID2 family. In terms of assembly, associates with the PRC2 complex.

Its subcellular location is the nucleus. Its function is as follows. Regulator of histone methyltransferase complexes that plays an essential role in embryonic development, including heart and liver development, neural tube fusion process and hematopoiesis. Acts as an accessory subunit for the core PRC2 (Polycomb repressive complex 2) complex, which mediates histone H3K27 (H3K27me3) trimethylation on chromatin. Binds DNA and mediates the recruitment of the PRC2 complex to target genes in embryonic stem cells, thereby playing a key role in stem cell differentiation and normal embryonic development. In cardiac cells, it is required to repress expression of cyclin-D1 (CCND1) by activating methylation of 'Lys-9' of histone H3 (H3K9me) by the GLP1/EHMT1 and G9a/EHMT2 histone methyltransferases. Also acts as a transcriptional repressor of ANF via its interaction with GATA4 and NKX2-5. Participates in the negative regulation of cell proliferation signaling. Does not have histone demethylase activity. This is Protein Jumonji (JARID2) from Gallus gallus (Chicken).